The sequence spans 266 residues: Phosphatidylglycerol--prolipoprotein diacylglyceryl transferase (266 aa).

7 helical membrane passes run 10–30 (VALAIGPLKIHWYGLMYLIGI), 56–76 (LVFWVACGVILGGRLGYVLFY), 92–112 (WKGGMSFHGGLLGVMLAVWWF), 120–140 (FFQLMDFIAPLVPIGLGAGRI), 171–191 (PSQLYQFALEGVALFVILWLF), 199–219 (ASVSGLFVLCYGIFRFVVEFV), and 233–253 (WLTMGQVLCVPMVLAGIALMV). Arg139 is a binding site for a 1,2-diacyl-sn-glycero-3-phospho-(1'-sn-glycerol).

Belongs to the Lgt family.

The protein localises to the cell inner membrane. The enzyme catalyses L-cysteinyl-[prolipoprotein] + a 1,2-diacyl-sn-glycero-3-phospho-(1'-sn-glycerol) = an S-1,2-diacyl-sn-glyceryl-L-cysteinyl-[prolipoprotein] + sn-glycerol 1-phosphate + H(+). It participates in protein modification; lipoprotein biosynthesis (diacylglyceryl transfer). Catalyzes the transfer of the diacylglyceryl group from phosphatidylglycerol to the sulfhydryl group of the N-terminal cysteine of a prolipoprotein, the first step in the formation of mature lipoproteins. The sequence is that of Phosphatidylglycerol--prolipoprotein diacylglyceryl transferase from Pseudomonas aeruginosa (strain LESB58).